A 231-amino-acid chain; its full sequence is Achaete-scute homolog 1 (231 aa).

Disordered regions lie at residues 1–24 (MESS…FLPP) and 39–92 (AAAA…PELM). Residues 39–51 (AAAAAQSAQQQQP) are compositionally biased toward low complexity. A compositionally biased stretch (basic residues) spans 76-85 (SAAKQVKRQR). In terms of domain architecture, bHLH spans 113 to 165 (AAVARRNERERNRVKLVNLGFATLREHVPNGAANKKMSKVETLRSAVEYIRAL). At K151 the chain carries N6-acetyllysine.

Efficient DNA binding requires dimerization with another bHLH protein. Forms a heterodimer with TCF3. In terms of tissue distribution, developing CNS and PNS at embryonic and postnatal stages. Expressed in the epithelium of glandular stomach.

The protein resides in the nucleus. Its function is as follows. Transcription factor that plays a key role in neuronal differentiation: acts as a pioneer transcription factor, accessing closed chromatin to allow other factors to bind and activate neural pathways. Directly binds the E box motif (5'-CANNTG-3') on promoters and promotes transcription of neuronal genes. The combination of three transcription factors, ASCL1, POU3F2/BRN2 and MYT1L, is sufficient to reprogram fibroblasts and other somatic cells into induced neuronal (iN) cells in vitro. Plays a role at early stages of development of specific neural lineages in most regions of the CNS, and of several lineages in the PNS. Essential for the generation of olfactory and autonomic neurons. Acts synergistically with FOXN4 to specify the identity of V2b neurons rather than V2a from bipotential p2 progenitors during spinal cord neurogenesis, probably through DLL4-NOTCH signaling activation. Involved in the regulation of neuroendocrine cell development in the glandular stomach. This Mus musculus (Mouse) protein is Achaete-scute homolog 1.